Consider the following 314-residue polypeptide: Olfactory receptor 6C6 (314 aa).

The Extracellular portion of the chain corresponds to 1-24; that stretch reads MKNKSMEIEFILLGLTDDPQLQIV. N3 is a glycosylation site (N-linked (GlcNAc...) asparagine). Residues 25-45 form a helical membrane-spanning segment; the sequence is IFLFLFLNYTLSLMGNLIIII. The Cytoplasmic portion of the chain corresponds to 46 to 63; that stretch reads LTLLDPRLKTPMYFFLRN. A helical membrane pass occupies residues 64 to 84; that stretch reads FSFLEVIFTTVCIPRFLITIV. At 85 to 95 the chain is on the extracellular side; the sequence is TRDKTISYNNC. A disulfide bond links C95 and C177. Residues 96–116 traverse the membrane as a helical segment; it reads ATQLFFILLPGVTEFYLLAAM. The Cytoplasmic segment spans residues 117–141; sequence SYDRYVAICKPLHYPIIMSSKVCYQ. The helical transmembrane segment at 142-162 threads the bilayer; sequence LVLSSWVTGFLIIFPPLVMGL. Over 163–199 the chain is Extracellular; the sequence is KLDFCASKTIDHFMCETSPILQISCTDTHVLELMSFT. Residues 200–220 traverse the membrane as a helical segment; sequence LAVVTLVVTLVLVILSYTCII. Residues 221–237 lie on the Cytoplasmic side of the membrane; it reads KTILKFSSAQQRNKAFS. The helical transmembrane segment at 238 to 258 threads the bilayer; the sequence is TCTSHMIVVSMTYGSCIFMYI. At 259-269 the chain is on the extracellular side; that stretch reads KPSAKERVTVS. Residues 270–290 traverse the membrane as a helical segment; sequence KGVALLYTSIAPLLNPFIYTL. Over 291–314 the chain is Cytoplasmic; the sequence is RNQQVKEVFWDVLQKNLCFSKRPF.

It belongs to the G-protein coupled receptor 1 family.

It is found in the cell membrane. Its function is as follows. Odorant receptor. The chain is Olfactory receptor 6C6 (OR6C6) from Homo sapiens (Human).